The primary structure comprises 300 residues: Ribosomal protein L11 methyltransferase (300 aa).

Thr141, Gly164, Asp186, and Asn233 together coordinate S-adenosyl-L-methionine.

It belongs to the methyltransferase superfamily. PrmA family.

The protein resides in the cytoplasm. It catalyses the reaction L-lysyl-[protein] + 3 S-adenosyl-L-methionine = N(6),N(6),N(6)-trimethyl-L-lysyl-[protein] + 3 S-adenosyl-L-homocysteine + 3 H(+). Methylates ribosomal protein L11. The chain is Ribosomal protein L11 methyltransferase from Synechocystis sp. (strain ATCC 27184 / PCC 6803 / Kazusa).